The primary structure comprises 171 residues: Actin-related protein 2/3 complex subunit 4 (171 aa).

Belongs to the ARPC4 family. Component of the Arp2/3 complex composed of ARP2, ARP3, ARC40/p41-ARC, ARC35/p34-ARC, ARC18/p21-ARC, ARC19/p20-ARC and ARC16/p16-ARC.

It localises to the cytoplasm. Its subcellular location is the cytoskeleton. It is found in the actin patch. Its function is as follows. Functions as actin-binding component of the Arp2/3 complex which is involved in regulation of actin polymerization and together with an activating nucleation-promoting factor (NPF) mediates the formation of branched actin networks. Seems to contact the mother actin filament. The protein is Actin-related protein 2/3 complex subunit 4 (ARC19) of Saccharomyces cerevisiae (strain ATCC 204508 / S288c) (Baker's yeast).